We begin with the raw amino-acid sequence, 286 residues long: UPF0761 membrane protein KPN78578_41360 (286 aa).

Helical transmembrane passes span 44–64, 74–94, 104–124, 140–160, 183–203, 210–230, and 244–264; these read LLSL…FPMF, FIFA…IEQF, VGAF…DSAL, FAVY…SLAI, LFPL…VPTT, AVIG…AFAL, and VISV…IVLL.

It belongs to the UPF0761 family.

It localises to the cell inner membrane. This chain is UPF0761 membrane protein KPN78578_41360, found in Klebsiella pneumoniae subsp. pneumoniae (strain ATCC 700721 / MGH 78578).